Consider the following 506-residue polypeptide: Galactose/methyl galactoside import ATP-binding protein MglA (506 aa).

2 consecutive ABC transporter domains span residues Leu-14 to Ser-249 and Asn-259 to Leu-506. Gly-46–Ser-53 lines the ATP pocket.

Belongs to the ABC transporter superfamily. Galactose/methyl galactoside importer (TC 3.A.1.2.3) family. As to quaternary structure, the complex is composed of one ATP-binding protein (MglA), two transmembrane proteins (MglC) and a solute-binding protein (MglB).

The protein localises to the cell inner membrane. The catalysed reaction is D-galactose(out) + ATP + H2O = D-galactose(in) + ADP + phosphate + H(+). The enzyme catalyses methyl beta-D-galactoside(out) + ATP + H2O = methyl beta-D-galactoside(in) + ADP + phosphate + H(+). With respect to regulation, stimulated 3-fold by galactose and inhibited by vanadate, N-ethylmaleimide, and 5-methoxyindole-2-carboxylic acid. Part of the ABC transporter complex MglABC involved in galactose/methyl galactoside import. Responsible for energy coupling to the transport system. The sequence is that of Galactose/methyl galactoside import ATP-binding protein MglA from Salmonella typhimurium (strain LT2 / SGSC1412 / ATCC 700720).